Here is a 117-residue protein sequence, read N- to C-terminus: Large ribosomal subunit protein uL18 (117 aa).

Belongs to the universal ribosomal protein uL18 family. As to quaternary structure, part of the 50S ribosomal subunit; part of the 5S rRNA/L5/L18/L25 subcomplex. Contacts the 5S and 23S rRNAs.

In terms of biological role, this is one of the proteins that bind and probably mediate the attachment of the 5S RNA into the large ribosomal subunit, where it forms part of the central protuberance. This chain is Large ribosomal subunit protein uL18, found in Haemophilus influenzae (strain 86-028NP).